Consider the following 267-residue polypeptide: MSLESLFQHIIFSEHQAEESRRVMREVRSEITRCRGKIKKATEDLSEEKIKLESKVQQLSEKSFLLELLKTHENALERQLSEIISERDTLLQACEAIKNKTTEEEERFIKEITDFNDNYEITKKRDTLMKENIEMEMADLDSQADVLRREMKSVERNRGQLWELQKLKNELLQELFTLQKKLKVLKDEETEAICITKQLEAEKTKVRDKPQHDPECVRLKRELDLYKAEDMESVYRALQAEVDLLELALAPKDPQDSNSLSHEPPHT.

2 coiled-coil regions span residues 24-97 and 128-191; these read MREV…CEAI and LMKE…EETE.

This sequence belongs to the CCDC172 family. In terms of assembly, may interact with TEKT2.

It localises to the cytoplasm. The protein localises to the cell projection. The protein resides in the cilium. The protein is Coiled-coil domain-containing protein 172 (Ccdc172) of Mus musculus (Mouse).